The chain runs to 307 residues: tRNA dimethylallyltransferase (307 aa).

ATP is bound at residue Gly-9–Thr-16. Thr-11–Thr-16 serves as a coordination point for substrate. The segment at Asp-34 to Gln-37 is interaction with substrate tRNA.

This sequence belongs to the IPP transferase family. In terms of assembly, monomer. Mg(2+) is required as a cofactor.

The catalysed reaction is adenosine(37) in tRNA + dimethylallyl diphosphate = N(6)-dimethylallyladenosine(37) in tRNA + diphosphate. Its function is as follows. Catalyzes the transfer of a dimethylallyl group onto the adenine at position 37 in tRNAs that read codons beginning with uridine, leading to the formation of N6-(dimethylallyl)adenosine (i(6)A). The protein is tRNA dimethylallyltransferase of Levilactobacillus brevis (strain ATCC 367 / BCRC 12310 / CIP 105137 / JCM 1170 / LMG 11437 / NCIMB 947 / NCTC 947) (Lactobacillus brevis).